We begin with the raw amino-acid sequence, 316 residues long: Methionyl-tRNA formyltransferase (316 aa).

112–115 (SLLP) lines the (6S)-5,6,7,8-tetrahydrofolate pocket.

The protein belongs to the Fmt family.

The enzyme catalyses L-methionyl-tRNA(fMet) + (6R)-10-formyltetrahydrofolate = N-formyl-L-methionyl-tRNA(fMet) + (6S)-5,6,7,8-tetrahydrofolate + H(+). Functionally, attaches a formyl group to the free amino group of methionyl-tRNA(fMet). The formyl group appears to play a dual role in the initiator identity of N-formylmethionyl-tRNA by promoting its recognition by IF2 and preventing the misappropriation of this tRNA by the elongation apparatus. This Haemophilus ducreyi (strain 35000HP / ATCC 700724) protein is Methionyl-tRNA formyltransferase.